Reading from the N-terminus, the 31-residue chain is MESFAYVLILTLAIATLFFAIAFRDPPKIGK.

Residues 3-23 (SFAYVLILTLAIATLFFAIAF) traverse the membrane as a helical segment.

This sequence belongs to the PsbT family. In terms of assembly, PSII is composed of 1 copy each of membrane proteins PsbA, PsbB, PsbC, PsbD, PsbE, PsbF, PsbH, PsbI, PsbJ, PsbK, PsbL, PsbM, PsbT, PsbX, PsbY, PsbZ, Psb30/Ycf12, peripheral proteins PsbO, CyanoQ (PsbQ), PsbU, PsbV and a large number of cofactors. It forms dimeric complexes.

It localises to the cellular thylakoid membrane. Its function is as follows. Found at the monomer-monomer interface of the photosystem II (PS II) dimer, plays a role in assembly and dimerization of PSII. PSII is a light-driven water plastoquinone oxidoreductase, using light energy to abstract electrons from H(2)O, generating a proton gradient subsequently used for ATP formation. The polypeptide is Photosystem II reaction center protein T (Parasynechococcus marenigrum (strain WH8102)).